The sequence spans 163 residues: Single-stranded DNA-binding protein 1 (163 aa).

The SSB domain occupies Met1–Glu104. Positions Arg106 to Phe163 are disordered. Residues Gly111–Ser135 show a composition bias toward low complexity. The short motif at Asp158–Phe163 is the Important for interaction with partner proteins element.

As to quaternary structure, homotetramer.

Functionally, plays an important role in DNA replication, recombination and repair. Binds to ssDNA and to an array of partner proteins to recruit them to their sites of action during DNA metabolism. The chain is Single-stranded DNA-binding protein 1 (ssb1) from Streptococcus agalactiae serotype III (strain NEM316).